The chain runs to 61 residues: Metallothionein-1M (61 aa).

Positions M1–C29 are beta. A divalent metal cation is bound by residues C5, C7, C13, C15, C19, C21, C24, C26, C29, C33, C34, C36, C37, C41, C44, C48, C50, C57, C59, and C60. Positions K30–A61 are alpha.

It belongs to the metallothionein superfamily. Type 1 family. As to quaternary structure, monomer.

Metallothioneins have a high content of cysteine residues that bind various heavy metals; these proteins are transcriptionally regulated by both heavy metals and glucocorticoids. This is Metallothionein-1M (MT1M) from Homo sapiens (Human).